Consider the following 176-residue polypeptide: NAD(P)H-quinone oxidoreductase subunit 6, chloroplastic (176 aa).

Helical transmembrane passes span 10–30 (FLLV…VLLP), 33–53 (IFSA…YILA), 61–81 (AQLL…VMFM), 92–112 (LWTV…FSLI), and 152–172 (FFLP…GAIS).

Belongs to the complex I subunit 6 family. NDH is composed of at least 16 different subunits, 5 of which are encoded in the nucleus.

It localises to the plastid. The protein resides in the chloroplast thylakoid membrane. The catalysed reaction is a plastoquinone + NADH + (n+1) H(+)(in) = a plastoquinol + NAD(+) + n H(+)(out). It catalyses the reaction a plastoquinone + NADPH + (n+1) H(+)(in) = a plastoquinol + NADP(+) + n H(+)(out). Its function is as follows. NDH shuttles electrons from NAD(P)H:plastoquinone, via FMN and iron-sulfur (Fe-S) centers, to quinones in the photosynthetic chain and possibly in a chloroplast respiratory chain. The immediate electron acceptor for the enzyme in this species is believed to be plastoquinone. Couples the redox reaction to proton translocation, and thus conserves the redox energy in a proton gradient. This is NAD(P)H-quinone oxidoreductase subunit 6, chloroplastic (ndhG) from Arabis hirsuta (Hairy rock-cress).